We begin with the raw amino-acid sequence, 197 residues long: Putative manganese efflux pump MntP 1 (197 aa).

Helical transmembrane passes span 8–28, 43–63, 66–86, 123–143, 146–166, and 176–196; these read VILL…GLGA, VYAA…GYLL, VLLG…LILL, LAIA…LLAL, WLAC…GIYL, and DKAE…VMFI.

It belongs to the MntP (TC 9.B.29) family.

It localises to the cell inner membrane. Probably functions as a manganese efflux pump. The sequence is that of Putative manganese efflux pump MntP 1 from Psychrobacter cryohalolentis (strain ATCC BAA-1226 / DSM 17306 / VKM B-2378 / K5).